The chain runs to 110 residues: Large ribosomal subunit protein uL24 (110 aa).

Belongs to the universal ribosomal protein uL24 family. As to quaternary structure, part of the 50S ribosomal subunit.

In terms of biological role, one of two assembly initiator proteins, it binds directly to the 5'-end of the 23S rRNA, where it nucleates assembly of the 50S subunit. Its function is as follows. One of the proteins that surrounds the polypeptide exit tunnel on the outside of the subunit. This is Large ribosomal subunit protein uL24 from Thermus thermophilus (strain ATCC BAA-163 / DSM 7039 / HB27).